The primary structure comprises 595 residues: Coiled-coil domain-containing protein 22 (595 aa).

Positions Met-1–Arg-321 are sufficient for interaction with COMMD1. The tract at residues Met-1–Ser-447 is sufficicient and required for interaction with CCDC93. Over residues Thr-218 to His-230 the composition is skewed to basic and acidic residues. Residues Thr-218 to Ala-243 are disordered. Residues Glu-323–Cys-369 adopt a coiled-coil conformation. At Ser-410 the chain carries Phosphoserine. Coiled coils occupy residues Ser-447–Leu-484 and Gly-564–Ala-595.

The protein belongs to the CCDC22 family. Component of the commander complex consisting of the CCC subcomplex and the retriever subcomplex. Component of the CCC (COMMD/CCDC22/CCDC93) subcomplex consisting of COMMD1, COMMD2, COMMD3, COMMD4, COMMD5, COMMD6, COMMD7, COMMD8, COMMD9, COMMD10, CCDC22 and CCDC93. Forms a coiled-coil heterodimer with CCDC22; this heterodimer interacts with the guanine nucleotide exchange factor DENND10; the interaction is direct. Interacts with CUL1, CUL2, CUL3, SKP1, BTRC. Interacts with SNX17 and SNX31. Interacts with CPNE1 and CPNE4.

It localises to the endosome. The protein resides in the cytoplasm. It is found in the cytoskeleton. Its subcellular location is the microtubule organizing center. The protein localises to the centrosome. Its function is as follows. Component of the commander complex that is essential for endosomal recycling of transmembrane cargos; the Commander complex is composed of composed of the CCC subcomplex and the retriever subcomplex. Component of the CCC complex, which is involved in the regulation of endosomal recycling of surface proteins, including integrins, signaling receptor and channels. Involved in regulation of NF-kappa-B signaling. Promotes ubiquitination of I-kappa-B-kinase subunit IKBKB and its subsequent proteasomal degradation leading to NF-kappa-B activation; the function may involve association with COMMD8 and a CUL1-dependent E3 ubiquitin ligase complex. May down-regulate NF-kappa-B activity via association with COMMD1 and involving a CUL2-dependent E3 ubiquitin ligase complex. Regulates the cellular localization of COMM domain-containing proteins, such as COMMD1 and COMMD10. Component of the CCC complex, which is involved in the regulation of endosomal recycling of surface proteins, including integrins, signaling receptor and channels. The CCC complex associates with SNX17, retriever and WASH complexes to prevent lysosomal degradation and promote cell surface recycling of numerous cargos such as integrins ITGA5:ITGB1. Plays a role in copper ion homeostasis. Involved in copper-dependent ATP7A trafficking between the trans-Golgi network and vesicles in the cell periphery; the function is proposed to depend on its association within the CCC complex and cooperation with the WASH complex on early endosomes. This is Coiled-coil domain-containing protein 22 (CCDC22) from Bos taurus (Bovine).